The sequence spans 415 residues: Multifunctional CCA protein (415 aa).

The ATP site is built by Gly-8 and Arg-11. CTP contacts are provided by Gly-8 and Arg-11. Residues Asp-21 and Asp-23 each coordinate Mg(2+). Arg-91, Arg-143, and Arg-146 together coordinate ATP. The CTP site is built by Arg-91, Arg-143, and Arg-146. In terms of domain architecture, HD spans 232–333 (TGVHVMMVID…TRLLERCDAL (102 aa)).

The protein belongs to the tRNA nucleotidyltransferase/poly(A) polymerase family. Bacterial CCA-adding enzyme type 1 subfamily. As to quaternary structure, monomer. Can also form homodimers and oligomers. The cofactor is Mg(2+). Requires Ni(2+) as cofactor.

It carries out the reaction a tRNA precursor + 2 CTP + ATP = a tRNA with a 3' CCA end + 3 diphosphate. It catalyses the reaction a tRNA with a 3' CCA end + 2 CTP + ATP = a tRNA with a 3' CCACCA end + 3 diphosphate. Its function is as follows. Catalyzes the addition and repair of the essential 3'-terminal CCA sequence in tRNAs without using a nucleic acid template. Adds these three nucleotides in the order of C, C, and A to the tRNA nucleotide-73, using CTP and ATP as substrates and producing inorganic pyrophosphate. tRNA 3'-terminal CCA addition is required both for tRNA processing and repair. Also involved in tRNA surveillance by mediating tandem CCA addition to generate a CCACCA at the 3' terminus of unstable tRNAs. While stable tRNAs receive only 3'-terminal CCA, unstable tRNAs are marked with CCACCA and rapidly degraded. The chain is Multifunctional CCA protein from Cupriavidus pinatubonensis (strain JMP 134 / LMG 1197) (Cupriavidus necator (strain JMP 134)).